The sequence spans 341 residues: Probable 2' cyclic ADP-D-ribose synthase TcpO (341 aa).

The TIR domain occupies 204–336 (KEYDIFVSHS…EIIHEILERI (133 aa)). NAD(+) contacts are provided by residues 213–214 (SS) and lysine 243. The active site involves glutamate 279.

The enzyme catalyses NAD(+) + H2O = ADP-D-ribose + nicotinamide + H(+). It catalyses the reaction NAD(+) = 2'cADPR + nicotinamide + H(+). In terms of biological role, NAD(+) hydrolase (NADase) that catalyzes cleavage of NAD(+) into ADP-D-ribose (ADPR) and nicotinamide. In addition to ADPR, also generates a cyclization variant of cyclic ADPR (cADPR), termed v-cADPR (probably 2'cADPR). In Methanobrevibacter olleyae, this protein is Probable 2' cyclic ADP-D-ribose synthase TcpO.